Consider the following 190-residue polypeptide: Xanthine phosphoribosyltransferase (190 aa).

Xanthine is bound by residues leucine 20 and asparagine 27. A 5-phospho-alpha-D-ribose 1-diphosphate-binding site is contributed by alanine 128–alanine 132. Lysine 156 is a binding site for xanthine.

It belongs to the purine/pyrimidine phosphoribosyltransferase family. Xpt subfamily. In terms of assembly, homodimer.

It localises to the cytoplasm. The catalysed reaction is XMP + diphosphate = xanthine + 5-phospho-alpha-D-ribose 1-diphosphate. The protein operates within purine metabolism; XMP biosynthesis via salvage pathway; XMP from xanthine: step 1/1. Converts the preformed base xanthine, a product of nucleic acid breakdown, to xanthosine 5'-monophosphate (XMP), so it can be reused for RNA or DNA synthesis. This chain is Xanthine phosphoribosyltransferase, found in Ruminiclostridium cellulolyticum (strain ATCC 35319 / DSM 5812 / JCM 6584 / H10) (Clostridium cellulolyticum).